A 593-amino-acid chain; its full sequence is Proteasome-associated ATPase (593 aa).

The stretch at 5-94 forms a coiled coil; sequence DDADSRAARW…KEEIDRLAQP (90 aa). 281–286 contributes to the ATP binding site; the sequence is GCGKTL. Residues 574–593 are disordered; sequence GKGADAGRSIETASNTGQYL. A compositionally biased stretch (polar residues) spans 584 to 593; it reads ETASNTGQYL. The docks into pockets in the proteasome alpha-ring stretch occupies residues 592–593; that stretch reads YL.

The protein belongs to the AAA ATPase family. In terms of assembly, homohexamer. Assembles into a hexameric ring structure that caps the 20S proteasome core. Strongly interacts with the prokaryotic ubiquitin-like protein Pup through a hydrophobic interface; the interacting region of ARC lies in its N-terminal coiled-coil domain. There is one Pup binding site per ARC hexamer ring. Upon ATP-binding, the C-terminus of ARC interacts with the alpha-rings of the proteasome core, possibly by binding to the intersubunit pockets.

It functions in the pathway protein degradation; proteasomal Pup-dependent pathway. ATPase which is responsible for recognizing, binding, unfolding and translocation of pupylated proteins into the bacterial 20S proteasome core particle. May be essential for opening the gate of the 20S proteasome via an interaction with its C-terminus, thereby allowing substrate entry and access to the site of proteolysis. Thus, the C-termini of the proteasomal ATPase may function like a 'key in a lock' to induce gate opening and therefore regulate proteolysis. The chain is Proteasome-associated ATPase from Salinispora tropica (strain ATCC BAA-916 / DSM 44818 / JCM 13857 / NBRC 105044 / CNB-440).